The primary structure comprises 191 residues: UPF0302 protein USA300HOU_1400 (191 aa).

The protein belongs to the UPF0302 family.

The polypeptide is UPF0302 protein USA300HOU_1400 (Staphylococcus aureus (strain USA300 / TCH1516)).